Reading from the N-terminus, the 901-residue chain is HTH-type transcriptional regulator MalT (901 aa).

An ATP-binding site is contributed by 39 to 46 (SPAGYGKT). In terms of domain architecture, HTH luxR-type spans 829–894 (ELIRTSPLTQ…DAVQHAQQLL (66 aa)). The H-T-H motif DNA-binding region spans 853-872 (NEQIAGELEVAATTIKTHIR).

The protein belongs to the MalT family. As to quaternary structure, monomer in solution. Oligomerizes to an active state in the presence of the positive effectors ATP and maltotriose.

Activated by ATP and maltotriose, which are both required for DNA binding. Functionally, positively regulates the transcription of the maltose regulon whose gene products are responsible for uptake and catabolism of malto-oligosaccharides. Specifically binds to the promoter region of its target genes, recognizing a short DNA motif called the MalT box. The protein is HTH-type transcriptional regulator MalT of Escherichia coli (strain K12 / MC4100 / BW2952).